We begin with the raw amino-acid sequence, 463 residues long: Xanthone prenyltransferase B (463 aa).

The protein belongs to the tryptophan dimethylallyltransferase family.

It participates in secondary metabolite biosynthesis. Mn(2+) and Co(2+) strongly enhance prenylation activity. Its function is as follows. Dehydrogenase involved in the conversion of monodictyphenone to the prenyl xanthones such as emericellin, shamixanthone and epishamixanthone. Monodictyphenone is first converted to variecoxanthone A via a paeciloxanthone intermediate by the consecutive actions of the FAD-dependent monooxygenase mdpD and the xanthone prenyltransferase xptB. XptB catalyzes regular O-prenylation at the hydroxy group of C-7 of the xanthone ring. Variecoxanthone A is further prenylated to emericellin by xptA before being reduced to shamixanthone and epishamixanthone by the dehydrogenase xptC. The polypeptide is Xanthone prenyltransferase B (Emericella nidulans (strain FGSC A4 / ATCC 38163 / CBS 112.46 / NRRL 194 / M139) (Aspergillus nidulans)).